The sequence spans 545 residues: E3 ubiquitin-protein ligase ipaH9.8 (545 aa).

An interaction with target proteins region spans residues 1–242; the sequence is MLPINNNFSL…YHGPRIYFSM (242 aa). 8 LRR repeats span residues 57–77, 78–99, 100–117, 118–139, 140–157, 158–179, 182–203, and 205–228; these read NSDELRLDRLNLSSLPDNLPA, QITLLNVSYNQLTNLPELPVTL, KKLYSASNKLSELPVLPP, ALESLQVQHNELENLPALPDSL, LTMNISYNEIVSLPSLPQ, ALKNLRATRNFLTELPAFSEGN, VVREYFFDRNQISHIPESILNL, and NECSIHISDNPLSSHALQALQRLT. A linker region spans residues 243-250; that stretch reads SDGQQNTL. Residues 251-545 form an E3 ubiquitin-protein ligase catalytic domain region; it reads HRPLADAVTA…SENGSQLHHS (295 aa). The region spanning 253–545 is the NEL domain; it reads PLADAVTAWF…SENGSQLHHS (293 aa). The Glycyl thioester intermediate role is filled by cysteine 337.

Belongs to the LRR-containing bacterial E3 ligase family. In terms of assembly, also interacts with human and mouse U2AF1 (U2AF35). Ubiquitinated in the presence of host E1 ubiquitin-activating enzyme, E2 ubiquitin-conjugating enzyme and ubiquitin.

The protein resides in the secreted. It is found in the host cytoplasm. Its subcellular location is the host nucleus. The enzyme catalyses S-ubiquitinyl-[E2 ubiquitin-conjugating enzyme]-L-cysteine + [acceptor protein]-L-lysine = [E2 ubiquitin-conjugating enzyme]-L-cysteine + N(6)-ubiquitinyl-[acceptor protein]-L-lysine.. Its activity is regulated as follows. Exists in an autoinhibited state in the absence of substrate protein, due to interactions of the leucine-rich repeats with NEL domain. Is activated upon binding to a substrate protein. Its function is as follows. Effector E3 ubiquitin ligase that interferes with host's ubiquitination pathway and modulates the acute inflammatory responses, thus facilitating bacterial colonization within the host cell. Interacts with IKBKG (NEMO) and TNIP1 (ABIN-1), a ubiquitin-binding adapter protein, which results in TNIP1-dependent 'Lys-27'-linked polyubiquitination of IKBKG. Consequently, polyubiquitinated IKBKG undergoes proteasome-dependent degradation, which perturbs NF-kappa-B activation during bacterial infection. Mediates polyubiquitination of host U2AF1, leading to its proteasomal degradation. Catalyzes 'Lys-48'-linked polyubiquitination and subsequent degradation of a subset of host guanylate-binding proteins (GBP1, GBP2, GBP4 and GBP6), thereby suppressing host cell defense. In contrast, host GBP3 and GBP7 are not ubiquitinated by IpaH9.8. Uses UBE2D2 (UBCH5B) as an E2 ubiquitin-conjugating enzyme. The sequence is that of E3 ubiquitin-protein ligase ipaH9.8 (ipaH9.8) from Shigella dysenteriae serotype 1 (strain Sd197).